Here is a 116-residue protein sequence, read N- to C-terminus: Large ribosomal subunit protein bL17 (116 aa).

It belongs to the bacterial ribosomal protein bL17 family. In terms of assembly, part of the 50S ribosomal subunit. Contacts protein L32.

The protein is Large ribosomal subunit protein bL17 of Prochlorococcus marinus (strain NATL2A).